Here is a 262-residue protein sequence, read N- to C-terminus: Caffeyl-CoA reductase-Etf complex subunit CarD (262 aa).

This sequence belongs to the ETF beta-subunit/FixA family. As to quaternary structure, part of the homotrimeric caffeyl-CoA reductase-Etf complex composed of (R)-2-hydroxyisocaproyl-CoA dehydratase CarC, and the electron transfer flavoprotein (ETF) alpha (CarE) and beta (CarD) subunits. Requires FAD as cofactor. It depends on AMP as a cofactor.

It localises to the cytoplasm. The catalysed reaction is hydrocaffeoyl-CoA + 2 reduced [2Fe-2S]-[ferredoxin] + 2 NAD(+) = (E)-caffeoyl-CoA + 2 oxidized [2Fe-2S]-[ferredoxin] + 2 NADH. Its function is as follows. Caffeyl-CoA reductase-Etf complex catalyzes the reduction of caffeyl-CoA to yield hydrocaffeyl-CoA. It couples the endergonic ferredoxin reduction with NADH as reductant to the exergonic reduction of caffeoyl-CoA with the same reductant. It uses the mechanism of electron bifurcation to overcome the steep energy barrier in ferredoxin reduction. The electron transfer flavoprotein (Etf) mediates the electron transfer between the different donors and acceptors. The complex can also reduce 4-coumaroyl-CoA and feruloyl-CoA. The sequence is that of Caffeyl-CoA reductase-Etf complex subunit CarD from Acetobacterium woodii (strain ATCC 29683 / DSM 1030 / JCM 2381 / KCTC 1655 / WB1).